The primary structure comprises 208 residues: CASP-like protein 3A1 (208 aa).

Polar residues-rich tracts occupy residues 1 to 11 (MGSFANGQNGS) and 17 to 33 (TPAT…TTSA). Residues 1–33 (MGSFANGQNGSELGIQTPATGSNAALEPPTTSA) form a disordered region. Over 1 to 43 (MGSFANGQNGSELGIQTPATGSNAALEPPTTSAAAPRCPRLGM) the chain is Cytoplasmic. The chain crosses the membrane as a helical span at residues 44 to 64 (AMVAARAAALVMALLSVSLMV). Over 65–92 (SAKQRGTLAIFGIEIPLYAKWSLSDSLQ) the chain is Extracellular. Residues 93-113 (SLVGISAAAAAYSLAQLLSIA) form a helical membrane-spanning segment. Over 114 to 128 (HTALKKAPVVPSRRY) the chain is Cytoplasmic. Residues 129-149 (AWMLLAGDQVFAYAMLSAGSA) traverse the membrane as a helical segment. At 150–183 (AAAVANLNRTGVRHTALPNFCKPLPRFCDLSAAS) the chain is on the extracellular side. N-linked (GlcNAc...) asparagine glycosylation is present at N157. Residues 184 to 204 (IACAFLGCAFLAASAVIDVIW) form a helical membrane-spanning segment. The Cytoplasmic segment spans residues 205 to 208 (LSRL).

This sequence belongs to the Casparian strip membrane proteins (CASP) family. In terms of assembly, homodimer and heterodimers.

The protein resides in the cell membrane. The protein is CASP-like protein 3A1 of Hordeum vulgare subsp. vulgare (Domesticated barley).